The chain runs to 968 residues: RNA polymerase-associated protein RapA (968 aa).

Residues 164–334 (DVGRRHAPRV…FARLRLLDPN (171 aa)) enclose the Helicase ATP-binding domain. 177–184 (DEVGLGKT) lines the ATP pocket. Positions 280 to 283 (DEAH) match the DEAH box motif. Residues 490–662 (RVEWLMGYLT…YLASPDETEG (173 aa)) form the Helicase C-terminal domain.

The protein belongs to the SNF2/RAD54 helicase family. RapA subfamily. In terms of assembly, interacts with the RNAP. Has a higher affinity for the core RNAP than for the holoenzyme. Its ATPase activity is stimulated by binding to RNAP.

Its function is as follows. Transcription regulator that activates transcription by stimulating RNA polymerase (RNAP) recycling in case of stress conditions such as supercoiled DNA or high salt concentrations. Probably acts by releasing the RNAP, when it is trapped or immobilized on tightly supercoiled DNA. Does not activate transcription on linear DNA. Probably not involved in DNA repair. The sequence is that of RNA polymerase-associated protein RapA from Escherichia coli O81 (strain ED1a).